The following is a 332-amino-acid chain: Protein pelota homolog (332 aa).

The protein belongs to the eukaryotic release factor 1 family. Pelota subfamily. Monomer. The cofactor is a divalent metal cation.

The protein localises to the cytoplasm. May function in recognizing stalled ribosomes, interact with stem-loop structures in stalled mRNA molecules, and effect endonucleolytic cleavage of the mRNA. May play a role in the release non-functional ribosomes and degradation of damaged mRNAs. Has endoribonuclease activity. The sequence is that of Protein pelota homolog from Pyrobaculum calidifontis (strain DSM 21063 / JCM 11548 / VA1).